The primary structure comprises 384 residues: Putative ankyrin repeat protein L72 (384 aa).

ANK repeat units lie at residues Ala88 to Asn117, Gly119 to Ser146, Asp171 to Val200, Asp202 to Ser231, Asn233 to Asn261, Ile298 to Lys324, and Pro325 to Val357.

The sequence is that of Putative ankyrin repeat protein L72 from Acanthamoeba polyphaga (Amoeba).